A 219-amino-acid chain; its full sequence is Small ribosomal subunit protein uS3c (219 aa).

Residues 39–109 (IRQYIEKNLS…QIRINVIEVK (71 aa)) enclose the KH type-2 domain.

Belongs to the universal ribosomal protein uS3 family. As to quaternary structure, part of the 30S ribosomal subunit.

The protein localises to the plastid. The protein resides in the cyanelle. The polypeptide is Small ribosomal subunit protein uS3c (rps3) (Cyanophora paradoxa).